The sequence spans 207 residues: Protein GrpE (207 aa).

A disordered region spans residues 1 to 33 (MTDPNGPKDIPEQSAEAAEPVVSKPYIMPDDPE).

It belongs to the GrpE family. As to quaternary structure, homodimer.

It is found in the cytoplasm. In terms of biological role, participates actively in the response to hyperosmotic and heat shock by preventing the aggregation of stress-denatured proteins, in association with DnaK and GrpE. It is the nucleotide exchange factor for DnaK and may function as a thermosensor. Unfolded proteins bind initially to DnaJ; upon interaction with the DnaJ-bound protein, DnaK hydrolyzes its bound ATP, resulting in the formation of a stable complex. GrpE releases ADP from DnaK; ATP binding to DnaK triggers the release of the substrate protein, thus completing the reaction cycle. Several rounds of ATP-dependent interactions between DnaJ, DnaK and GrpE are required for fully efficient folding. The sequence is that of Protein GrpE from Rhodopseudomonas palustris (strain BisA53).